The chain runs to 195 residues: Killer cell lectin-like receptor subfamily G member 1 (195 aa).

The Cytoplasmic portion of the chain corresponds to 1–38; sequence MTDSVIYSMLELPTATQAQNDYGPQQKSSSSRPSCSCL. The ITIM motif motif lies at 5 to 10; sequence VIYSML. The helical; Signal-anchor for type II membrane protein transmembrane segment at 39 to 59 threads the bilayer; the sequence is VAIALGLLTAVLLSVLLYQWI. Residues 60–195 lie on the Extracellular side of the membrane; that stretch reads LCQGSNYSTC…KCPFADQALF (136 aa). Residue N65 is glycosylated (N-linked (GlcNAc...) asparagine). C75 and C86 are oxidised to a cystine. One can recognise a C-type lectin domain in the interval 82 to 185; the sequence is YGNHCYYFSV…CEVPLHWVCK (104 aa). Residues N97, N137, and N150 are each glycosylated (N-linked (GlcNAc...) asparagine). Cystine bridges form between C103/C184 and C163/C176.

As to quaternary structure, forms a monomer and homodimer; disulfide-linked. Interacts (via ITIM motif) with PTPN11 and INPP5D. As to expression, expressed specifically on natural killer (NK) cells and T-cells, mainly CD8 T-cells.

It localises to the cell membrane. Plays an inhibitory role on natural killer (NK) cells and T-cell functions upon binding to their non-MHC ligands. May mediate missing self recognition by binding to a highly conserved site on classical cadherins, enabling it to monitor expression of E-cadherin/CDH1, N-cadherin/CDH2 and R-cadherin/CDH4 on target cells. This chain is Killer cell lectin-like receptor subfamily G member 1 (KLRG1), found in Homo sapiens (Human).